We begin with the raw amino-acid sequence, 251 residues long: SNAP25 homologous protein SNAP29 (251 aa).

Residues 1–52 (MAPKNSSWNPFDDEKEAAKSFSLNPFDDDDDDKEVEKRFTSSLKPSGGKENQ) form a disordered region. Polar residues predominate over residues 40-52 (TSSLKPSGGKENQ). The t-SNARE coiled-coil homology domain occupies 186–248 (KTQIAKQDEA…KQSNQRARYL (63 aa)).

Belongs to the SNAP-25 family.

The protein resides in the membrane. It localises to the cytoplasm. SNAREs, soluble N-ethylmaleimide-sensitive factor-attachment protein receptors, are essential proteins for fusion of cellular membranes. SNAREs localized on opposing membranes assemble to form a trans-SNARE complex, an extended, parallel four alpha-helical bundle that drives membrane fusion. The sequence is that of SNAP25 homologous protein SNAP29 (SNAP29) from Arabidopsis thaliana (Mouse-ear cress).